Here is a 164-residue protein sequence, read N- to C-terminus: Dehydrin Rab16C (164 aa).

Positions 42-51 are enriched in gly residues; it reads MGGHHAGAGG. The segment at 42–164 is disordered; that stretch reads MGGHHAGAGG…KIKEKLPGQH (123 aa). Positions 105 to 115 are enriched in low complexity; the sequence is GNNHQQQQMMG. The span at 128–138 shows a compositional bias: gly residues; that stretch reads GMTGAGTGTGV. Residues 147-164 are compositionally biased toward basic and acidic residues; sequence GEKKGFMDKIKEKLPGQH.

This sequence belongs to the plant dehydrin family.

This is Dehydrin Rab16C (RAB16C) from Oryza sativa subsp. indica (Rice).